Reading from the N-terminus, the 283-residue chain is Bis(5'-nucleosyl)-tetraphosphatase, symmetrical (283 aa).

Belongs to the Ap4A hydrolase family.

It carries out the reaction P(1),P(4)-bis(5'-adenosyl) tetraphosphate + H2O = 2 ADP + 2 H(+). Its function is as follows. Hydrolyzes diadenosine 5',5'''-P1,P4-tetraphosphate to yield ADP. The chain is Bis(5'-nucleosyl)-tetraphosphatase, symmetrical from Pseudomonas aeruginosa (strain LESB58).